Consider the following 131-residue polypeptide: Large ribosomal subunit protein bL19 (131 aa).

Residues 111-124 (RIAERAERGSEKGK) show a composition bias toward basic and acidic residues. The interval 111–131 (RIAERAERGSEKGKTTPAAAE) is disordered.

This sequence belongs to the bacterial ribosomal protein bL19 family.

This protein is located at the 30S-50S ribosomal subunit interface and may play a role in the structure and function of the aminoacyl-tRNA binding site. The chain is Large ribosomal subunit protein bL19 from Methylobacterium nodulans (strain LMG 21967 / CNCM I-2342 / ORS 2060).